A 328-amino-acid polypeptide reads, in one-letter code: Putative lipase LIH1 (328 aa).

S181 functions as the Nucleophile in the catalytic mechanism. Active-site charge relay system residues include D253 and H315.

It belongs to the AB hydrolase superfamily. Lipase family.

It catalyses the reaction a triacylglycerol + H2O = a diacylglycerol + a fatty acid + H(+). In terms of biological role, lipases catalyze the hydrolysis of the ester bond of tri-, di- and monoglycerides of long-chain fatty acids into fatty acids and glycerol. In Saccharomyces cerevisiae (strain ATCC 204508 / S288c) (Baker's yeast), this protein is Putative lipase LIH1.